A 375-amino-acid polypeptide reads, in one-letter code: 23S rRNA (uracil(747)-C(5))-methyltransferase RlmC (375 aa).

Residues C3, C11, C14, and C87 each coordinate [4Fe-4S] cluster. Residues Q212, F241, E262, and N307 each contribute to the S-adenosyl-L-methionine site. Catalysis depends on C334, which acts as the Nucleophile.

This sequence belongs to the class I-like SAM-binding methyltransferase superfamily. RNA M5U methyltransferase family. RlmC subfamily.

The enzyme catalyses uridine(747) in 23S rRNA + S-adenosyl-L-methionine = 5-methyluridine(747) in 23S rRNA + S-adenosyl-L-homocysteine + H(+). Functionally, catalyzes the formation of 5-methyl-uridine at position 747 (m5U747) in 23S rRNA. The sequence is that of 23S rRNA (uracil(747)-C(5))-methyltransferase RlmC from Escherichia coli (strain SMS-3-5 / SECEC).